The following is a 362-amino-acid chain: Probable dual-specificity RNA methyltransferase RlmN (362 aa).

The active-site Proton acceptor is the Glu105. The Radical SAM core domain occupies 111-344; sequence HEYGNSICVT…VTIRREQGHD (234 aa). A disulfide bond links Cys118 and Cys349. Residues Cys125, Cys129, and Cys132 each coordinate [4Fe-4S] cluster. Residues 175-176, Ser207, 230-232, and Asn306 each bind S-adenosyl-L-methionine; these read GE and SLH. The active-site S-methylcysteine intermediate is the Cys349.

This sequence belongs to the radical SAM superfamily. RlmN family. It depends on [4Fe-4S] cluster as a cofactor.

It is found in the cytoplasm. It catalyses the reaction adenosine(2503) in 23S rRNA + 2 reduced [2Fe-2S]-[ferredoxin] + 2 S-adenosyl-L-methionine = 2-methyladenosine(2503) in 23S rRNA + 5'-deoxyadenosine + L-methionine + 2 oxidized [2Fe-2S]-[ferredoxin] + S-adenosyl-L-homocysteine. It carries out the reaction adenosine(37) in tRNA + 2 reduced [2Fe-2S]-[ferredoxin] + 2 S-adenosyl-L-methionine = 2-methyladenosine(37) in tRNA + 5'-deoxyadenosine + L-methionine + 2 oxidized [2Fe-2S]-[ferredoxin] + S-adenosyl-L-homocysteine. In terms of biological role, specifically methylates position 2 of adenine 2503 in 23S rRNA and position 2 of adenine 37 in tRNAs. The chain is Probable dual-specificity RNA methyltransferase RlmN from Bacillus thuringiensis subsp. konkukian (strain 97-27).